Reading from the N-terminus, the 505-residue chain is Putative thymidine phosphorylase (505 aa).

It belongs to the thymidine/pyrimidine-nucleoside phosphorylase family. Type 2 subfamily.

The enzyme catalyses thymidine + phosphate = 2-deoxy-alpha-D-ribose 1-phosphate + thymine. The protein is Putative thymidine phosphorylase of Hahella chejuensis (strain KCTC 2396).